The chain runs to 202 residues: GTP cyclohydrolase 1 (202 aa).

Residues cysteine 90, histidine 93, and cysteine 163 each contribute to the Zn(2+) site.

It belongs to the GTP cyclohydrolase I family. As to quaternary structure, homomer.

It catalyses the reaction GTP + H2O = 7,8-dihydroneopterin 3'-triphosphate + formate + H(+). The protein operates within cofactor biosynthesis; 7,8-dihydroneopterin triphosphate biosynthesis; 7,8-dihydroneopterin triphosphate from GTP: step 1/1. The protein is GTP cyclohydrolase 1 of Mycobacterium ulcerans (strain Agy99).